The following is a 164-amino-acid chain: Osteocalcin 2b (164 aa).

The first 18 residues, 1–18 (MKSLTLLTICAVLSVSLS), serve as a signal peptide directing secretion. A propeptide spanning residues 19–115 (MNDLALDVVL…LASVLLRRKR (97 aa)) is cleaved from the precursor. Residues 30 to 95 (PDPAAEPAPA…EAMAEDPAAA (66 aa)) show a composition bias toward low complexity. The disordered stretch occupies residues 30-99 (PDPAAEPAPA…EDPAAATEPE (70 aa)). Positions 128-160 (QVESLSEVCELNLACEHMAETAGIVAAYTAYYG) constitute a Gla domain. The Ca(2+) site is built by E130, E134, and E137. A 4-carboxyglutamate mark is found at E130, E134, and E137. C136 and C142 are oxidised to a cystine.

The protein belongs to the osteocalcin/matrix Gla protein family. Post-translationally, gamma-carboxyglutamate residues are formed by vitamin K dependent carboxylation. These residues are essential for the binding of calcium.

It localises to the secreted. Its function is as follows. Binds strongly to apatite and calcium. This is Osteocalcin 2b from Oncorhynchus mykiss (Rainbow trout).